The following is a 292-amino-acid chain: Ephrin type-A receptor 4a (292 aa).

ATP contacts are provided by residues 1–9 (IGIGEFGEV) and lysine 27. The region spanning 1–265 (IGIGEFGEVC…QIVNMLDKLI (265 aa)) is the Protein kinase domain. Aspartate 120 acts as the Proton acceptor in catalysis. Residue tyrosine 153 is modified to Phosphotyrosine; by autocatalysis.

This sequence belongs to the protein kinase superfamily. Tyr protein kinase family. Ephrin receptor subfamily. As to expression, widely expressed in the developing nervous system.

The protein localises to the cell membrane. The protein resides in the early endosome. It carries out the reaction L-tyrosyl-[protein] + ATP = O-phospho-L-tyrosyl-[protein] + ADP + H(+). In terms of biological role, receptor tyrosine kinase which binds membrane-bound ephrin family ligands residing on adjacent cells, leading to contact-dependent bidirectional signaling into neighboring cells. The signaling pathway downstream of the receptor is referred to as forward signaling while the signaling pathway downstream of the ephrin ligand is referred to as reverse signaling. Highly promiscuous, it has the unique property among Eph receptors to bind and to be physiologically activated by both GPI-anchored ephrin-A and transmembrane ephrin-B ligands including efna1 and efnb3. Upon activation by ephrin ligands, modulates cell morphology and integrin-dependent cell adhesion through regulation of the Rac, Rap and Rho GTPases activity. Plays an important role in the development of the nervous system controlling different steps of axonal guidance including the establishment of the corticospinal projections. This is Ephrin type-A receptor 4a (epha4a) from Danio rerio (Zebrafish).